The following is a 344-amino-acid chain: 4-hydroxy-3-methylbut-2-en-1-yl diphosphate synthase (flavodoxin) (344 aa).

Residues Cys253, Cys256, Cys288, and Glu295 each coordinate [4Fe-4S] cluster.

Belongs to the IspG family. Requires [4Fe-4S] cluster as cofactor.

The enzyme catalyses (2E)-4-hydroxy-3-methylbut-2-enyl diphosphate + oxidized [flavodoxin] + H2O + 2 H(+) = 2-C-methyl-D-erythritol 2,4-cyclic diphosphate + reduced [flavodoxin]. Its pathway is isoprenoid biosynthesis; isopentenyl diphosphate biosynthesis via DXP pathway; isopentenyl diphosphate from 1-deoxy-D-xylulose 5-phosphate: step 5/6. In terms of biological role, converts 2C-methyl-D-erythritol 2,4-cyclodiphosphate (ME-2,4cPP) into 1-hydroxy-2-methyl-2-(E)-butenyl 4-diphosphate. This Thermotoga petrophila (strain ATCC BAA-488 / DSM 13995 / JCM 10881 / RKU-1) protein is 4-hydroxy-3-methylbut-2-en-1-yl diphosphate synthase (flavodoxin).